Here is a 513-residue protein sequence, read N- to C-terminus: Sphingolipid C9-methyltransferase (513 aa).

The next 2 helical transmembrane spans lie at 52–72 and 74–94; these read ILFS…GLGF and TWVF…WSIM. Residues 222–223, 259–267, 285–290, and 315–316 each bind S-adenosyl-L-methionine; these read YT, VLDIGCGWG, TLGRNQ, and YR.

It belongs to the CFA/CMAS family.

It is found in the membrane. It carries out the reaction a (4E,8E)-4-sphinga-4,8-dienine ceramide + S-adenosyl-L-methionine = a 9-methyl-(4E,8E)-sphinga-4,8-dienine ceramide + S-adenosyl-L-homocysteine + H(+). It participates in lipid metabolism; sphingolipid metabolism. Its function is as follows. Catalyzes methylation of the sphingoid base component of glucosylceramides (GluCers) at the C9-position. Sphingolipid C9-methylation requires 4,8-desaturated ceramides as substrates. Glucosylceramides play important roles in growth, differentiation and pathogenicity. The methyl group at the C9-position distinguishes fungal glucosylceramides from those of plants and animals, and may thus play a role in host-pathogen interactions enabling the host to recognize the fungal attack and initiate specific defense responses. Not necessary for vegetative growth at low temperatures, but plays a role in hyphal formation on solid medium. The chain is Sphingolipid C9-methyltransferase from Candida albicans (strain SC5314 / ATCC MYA-2876) (Yeast).